A 122-amino-acid polypeptide reads, in one-letter code: Large ribosomal subunit protein uL14 (122 aa).

The protein belongs to the universal ribosomal protein uL14 family. Part of the 50S ribosomal subunit. Forms a cluster with proteins L3 and L19. In the 70S ribosome, L14 and L19 interact and together make contacts with the 16S rRNA in bridges B5 and B8.

Functionally, binds to 23S rRNA. Forms part of two intersubunit bridges in the 70S ribosome. The chain is Large ribosomal subunit protein uL14 from Thermotoga petrophila (strain ATCC BAA-488 / DSM 13995 / JCM 10881 / RKU-1).